Reading from the N-terminus, the 251-residue chain is tRNA-uridine aminocarboxypropyltransferase 2 (251 aa).

4 residues coordinate Zn(2+): cysteine 23, cysteine 26, cysteine 33, and cysteine 35. The DXTW motif lies at 131–134 (DGTW).

The protein belongs to the TDD superfamily. DTWD2 family.

The enzyme catalyses a uridine in tRNA + S-adenosyl-L-methionine = a 3-[(3S)-3-amino-3-carboxypropyl]uridine in tRNA + S-methyl-5'-thioadenosine + H(+). Catalyzes the formation of 3-(3-amino-3-carboxypropyl)uridine (acp3U) at position 20a in the D-loop of several cytoplasmic tRNAs (acp3U(20a)). In Drosophila melanogaster (Fruit fly), this protein is tRNA-uridine aminocarboxypropyltransferase 2.